The sequence spans 248 residues: 14-3-3-like protein G-BOX factor 14 kappa (248 aa).

A phosphoserine mark is found at Ser70, Ser112, and Ser193. Thr214 is modified (phosphothreonine).

It belongs to the 14-3-3 family. Interacts with the isocitrate dehydrogenase IDH3, and malate dehydrogenases MDH1 and MDH2. Interacts with CINV1.

The protein localises to the nucleus. The protein resides in the cytoplasm. In terms of biological role, is associated with a DNA binding complex that binds to the G box, a well-characterized cis-acting DNA regulatory element found in plant genes. Involved in the regulation of nutrient metabolism. Negative regulator of freezing tolerance that modulates cold-responsive C-repeat-binding factors (CBF) DREB1A AND DREB1B proteins stability by facilitating their ubiquitin-mediated degradation; this processus is counteracted by B1L. This Arabidopsis thaliana (Mouse-ear cress) protein is 14-3-3-like protein G-BOX factor 14 kappa.